A 248-amino-acid chain; its full sequence is UPF0736 protein Bcer98_0893 (248 aa).

It belongs to the UPF0736 family.

The sequence is that of UPF0736 protein Bcer98_0893 from Bacillus cytotoxicus (strain DSM 22905 / CIP 110041 / 391-98 / NVH 391-98).